Reading from the N-terminus, the 807-residue chain is Spondin-1 (807 aa).

Residues 1 to 28 (MRLSPVSLRLSRGPALLALALPLAAALA) form the signal peptide. The 166-residue stretch at 29 to 194 (FSDETLDKVT…DPTLDGVTDR (166 aa)) folds into the Reelin domain. 17 cysteine pairs are disulfide-bonded: Cys-44/Cys-128, Cys-156/Cys-182, Cys-199/Cys-336, Cys-200/Cys-340, Cys-202/Cys-415, Cys-443/Cys-480, Cys-454/Cys-489, Cys-459/Cys-494, Cys-502/Cys-538, Cys-513/Cys-517, Cys-548/Cys-554, Cys-559/Cys-595, Cys-570/Cys-574, Cys-605/Cys-610, Cys-615/Cys-650, Cys-626/Cys-630, and Cys-660/Cys-665. The Spondin domain maps to 195-388 (PILDCCACGT…LTSLDHPQSP (194 aa)). N-linked (GlcNAc...) asparagine glycosylation occurs at Asn-214. Positions 325, 354, and 358 each coordinate Ca(2+). 5 TSP type-1 domains span residues 442–495 (TCIY…PGCS), 501–555 (TCTM…EECS), 558–611 (SCLV…PECH), 614–666 (PCLL…PECP), and 668–721 (DCEL…RKCL). Asn-681 carries an N-linked (GlcNAc...) asparagine glycan. Residues 732 to 746 (REARESRRSEQLREE) are compositionally biased toward basic and acidic residues. Positions 732–752 (REARESRRSEQLREESDGEQF) are disordered. One can recognise a TSP type-1 6 domain in the interval 754–806 (GCRMRPWTAWSECTKLCGGGIQERYMTVKKRFKSSQFTSCKDKKEIRACNVHP).

Binds to the central extracellular domain of APP and inhibits beta-secretase cleavage of APP.

It localises to the secreted. The protein resides in the extracellular space. Its subcellular location is the extracellular matrix. Its function is as follows. Cell adhesion protein that promotes the attachment of spinal cord and sensory neuron cells and the outgrowth of neurites in vitro. May contribute to the growth and guidance of axons in both the spinal cord and the PNS. The chain is Spondin-1 (Spon1) from Mus musculus (Mouse).